The primary structure comprises 44 residues: Thioredoxin (44 aa).

One can recognise a Thioredoxin domain in the interval Ile-2 to Glu-44. Cys-29 and Cys-32 form a disulfide bridge.

The protein belongs to the thioredoxin family.

In terms of biological role, participates in various redox reactions through the reversible oxidation of its active center dithiol to a disulfide and catalyzes dithiol-disulfide exchange reactions. This chain is Thioredoxin (trxA), found in Tissierella creatinophila.